Reading from the N-terminus, the 198-residue chain is MIEFVYPHTQLVAGVDEVGRGPLVGAVVTAAVILDPARPIAGLNDSKKLSEKRRLALYEEIKEKALSWSLGRAEPHEIDELNILHATMLAMQRAVAGLHIAPEYVLIDGNRCPKLPMPAMAVVKGDSRVPEISAASILAKVTRDAEMAALDIVFPQYGFAQHKGYPTAFHLEKLAEHGATEHHRRSFGPVKRALGLAS.

Residues Gln10–Ser198 form the RNase H type-2 domain. Asp16, Glu17, and Asp108 together coordinate a divalent metal cation.

Belongs to the RNase HII family. Requires Mn(2+) as cofactor. The cofactor is Mg(2+).

The protein resides in the cytoplasm. It catalyses the reaction Endonucleolytic cleavage to 5'-phosphomonoester.. Endonuclease that specifically degrades the RNA of RNA-DNA hybrids. The polypeptide is Ribonuclease HII (Shigella sonnei (strain Ss046)).